The sequence spans 1939 residues: Myosin-4 (1939 aa).

In terms of domain architecture, Myosin N-terminal SH3-like spans 33–82; the sequence is DAKTSVFVVDPKESYVKAIVQSREGGKVTAKTEAGATVTVKEDQVFSMNP. 2 positions are modified to phosphothreonine: Thr-64 and Thr-69. Ser-79 carries the post-translational modification Phosphoserine. The Myosin motor domain maps to 86-782; it reads DKIEDMAMMT…LLGTLEEMRD (697 aa). Lys-130 is modified (N6,N6,N6-trimethyllysine). 179-186 lines the ATP pocket; that stretch reads GESGAGKT. Position 389 is a phosphotyrosine (Tyr-389). The residue at position 391 (Thr-391) is a Phosphothreonine. The residue at position 392 (Ser-392) is a Phosphoserine. Phosphothreonine is present on Thr-419. Residue Tyr-424 is modified to Phosphotyrosine. Position 625 is a phosphoserine (Ser-625). An actin-binding region spans residues 659–681; that stretch reads LNKLMTNLRSTHPHFVRCIIPNE. The residue at position 757 (His-757) is a Pros-methylhistidine. An actin-binding region spans residues 761–775; it reads KFGHTKVFFKAGLLG. Thr-776 carries the phosphothreonine modification. One can recognise an IQ domain in the interval 785-814; sequence LAQLITRTQAICRGFLMRVEFRKMMERRES. The stretch at 843 to 1939 forms a coiled coil; the sequence is LLKSAETEKE…EVHTKVISEE (1097 aa). Phosphoserine is present on residues Ser-1092, Ser-1162, and Ser-1237. Phosphothreonine is present on Thr-1241. Ser-1243 is subject to Phosphoserine. Thr-1255 carries the post-translational modification Phosphothreonine. Phosphoserine is present on Ser-1261. Thr-1265 carries the phosphothreonine modification. At Ser-1278 the chain carries Phosphoserine. Residue Thr-1286 is modified to Phosphothreonine. Phosphoserine is present on residues Ser-1288, Ser-1292, Ser-1303, Ser-1306, and Ser-1413. Tyr-1464 carries the phosphotyrosine modification. A Phosphothreonine modification is found at Thr-1467. At Ser-1474 the chain carries Phosphoserine. Tyr-1492 carries the post-translational modification Phosphotyrosine. At Ser-1495 the chain carries Phosphoserine. Residue Thr-1501 is modified to Phosphothreonine. Ser-1514 carries the post-translational modification Phosphoserine. At Thr-1517 the chain carries Phosphothreonine. Phosphoserine is present on residues Ser-1542, Ser-1547, Ser-1554, Ser-1574, Ser-1600, Ser-1603, Ser-1714, and Ser-1726. Phosphothreonine is present on residues Thr-1730 and Thr-1736. Ser-1739 is modified (phosphoserine).

The protein belongs to the TRAFAC class myosin-kinesin ATPase superfamily. Myosin family. As to quaternary structure, muscle myosin is a hexameric protein that consists of 2 heavy chain subunits (MHC), 2 alkali light chain subunits (MLC) and 2 regulatory light chain subunits (MLC-2).

Its subcellular location is the cytoplasm. The protein resides in the myofibril. Its function is as follows. Muscle contraction. This is Myosin-4 (MYH4) from Homo sapiens (Human).